Consider the following 319-residue polypeptide: Protein StrN (319 aa).

It participates in antibiotic biosynthesis; streptomycin biosynthesis. The protein is Protein StrN (strN) of Streptomyces griseus.